The primary structure comprises 249 residues: MSEAAETLDGWYSLHLFYAVDWTTFRLIAEDDREAMITELETFVKDKAVARESHQGDHAIYNITGQKADLLLWFLRPEMKELNQIENEFNKLRIADYLIPTYSYVSVIELSNYLAGKSDEDPYENPHVKARLYPELPHSEYICFYPMDKRRNETYNWYMLPIEDRKTLMYNHGMIGRKYAGKIKQFITGSVGFDDYEWGVTLFSNDVLQFKKIVYEMRFDETTARYGEFGSFYIGHILNIEDFKQFFSI.

Residues R131, Y145–K149, H172, and Q185 each bind Fe-coproporphyrin III. Y145 is an active-site residue.

It belongs to the ChdC family. Type 1 subfamily. Fe-coproporphyrin III serves as cofactor.

It catalyses the reaction Fe-coproporphyrin III + 2 H2O2 + 2 H(+) = heme b + 2 CO2 + 4 H2O. The enzyme catalyses Fe-coproporphyrin III + H2O2 + H(+) = harderoheme III + CO2 + 2 H2O. The catalysed reaction is harderoheme III + H2O2 + H(+) = heme b + CO2 + 2 H2O. The protein operates within porphyrin-containing compound metabolism; protoheme biosynthesis. Its function is as follows. Involved in coproporphyrin-dependent heme b biosynthesis. Catalyzes the decarboxylation of Fe-coproporphyrin III (coproheme) to heme b (protoheme IX), the last step of the pathway. The reaction occurs in a stepwise manner with a three-propionate intermediate. This chain is Coproheme decarboxylase, found in Staphylococcus epidermidis (strain ATCC 35984 / DSM 28319 / BCRC 17069 / CCUG 31568 / BM 3577 / RP62A).